The chain runs to 101 residues: Interleukin-8 (101 aa).

A signal peptide spans 1 to 22 (MPSQLRVAVLAAFLLSAVLCEG). Cystine bridges form between cysteine 34–cysteine 61 and cysteine 36–cysteine 77.

This sequence belongs to the intercrine alpha (chemokine CxC) family. As to quaternary structure, homodimer. Interacts with TNFAIP6 (via Link domain); this interaction interferes with chemokine binding to glycosaminoglycans.

Its subcellular location is the secreted. Its function is as follows. Chemotactic factor that mediates inflammatory response by attracting neutrophils, basophils, and T-cells to clear pathogens and protect the host from infection. Also plays an important role in neutrophil activation. Released in response to an inflammatory stimulus, exerts its effect by binding to the G-protein-coupled receptors CXCR1 and CXCR2, primarily found in neutrophils, monocytes and endothelial cells. G-protein heterotrimer (alpha, beta, gamma subunits) constitutively binds to CXCR1/CXCR2 receptor and activation by IL8 leads to beta and gamma subunits release from Galpha (GNAI2 in neutrophils) and activation of several downstream signaling pathways including PI3K and MAPK pathways. This is Interleukin-8 (CXCL8) from Cavia porcellus (Guinea pig).